The primary structure comprises 556 residues: Cytochrome P450 monooxygenase polC (556 aa).

Residues 17-37 (LCFAISLLCAVAIATFLHKLY) traverse the membrane as a helical segment. Cysteine 479 is a heme binding site.

It belongs to the cytochrome P450 family. Heme serves as cofactor.

The protein resides in the membrane. It catalyses the reaction motiol + 3 reduced [NADPH--hemoprotein reductase] + 3 O2 = 4beta-carboxyl motiol + 3 oxidized [NADPH--hemoprotein reductase] + 4 H2O + 4 H(+). It participates in secondary metabolite biosynthesis; terpenoid biosynthesis. Cytochrome P450 monooxygenase; part of the gene cluster that mediates the biosynthesis of antifungal fernane-type triterpenoid polytolypin. PolC uses motiol as a substrate and converts the methyl group at position C-4 to a carboxyl group. Within the pathway, the triterpene cyclase polA first catalyzes the cyclization of 2,3-oxidosqualene to motiol, polC converts the 4-alpha-methyl group of motiol to a carboxyl group, polB is responsible for appending a hydroxyl group at the 2-alpha position and polE is a dual functional P450, which can catalyze the formation of both the 1-beta-hydroxyl group and 10-beta-carboxyl group. This Polytolypa hystricis (strain UAMH7299) protein is Cytochrome P450 monooxygenase polC.